Here is a 518-residue protein sequence, read N- to C-terminus: Uronate isomerase (518 aa).

The protein belongs to the metallo-dependent hydrolases superfamily. Uronate isomerase family.

It carries out the reaction D-glucuronate = D-fructuronate. It catalyses the reaction aldehydo-D-galacturonate = keto-D-tagaturonate. Its pathway is carbohydrate metabolism; pentose and glucuronate interconversion. The chain is Uronate isomerase (uxaC) from Corynebacterium glutamicum (strain ATCC 13032 / DSM 20300 / JCM 1318 / BCRC 11384 / CCUG 27702 / LMG 3730 / NBRC 12168 / NCIMB 10025 / NRRL B-2784 / 534).